Consider the following 147-residue polypeptide: Ubiquitin-conjugating enzyme E2 D4 (147 aa).

Residues 1–147 form the UBC core domain; sequence MALKRIQKEL…AREWTQKYAM (147 aa). Cys-85 acts as the Glycyl thioester intermediate in catalysis.

It belongs to the ubiquitin-conjugating enzyme family. As to quaternary structure, interacts with map3k10/mlk2. At embryonic stages 28 to 35, expressed in the somites, eye primordia, otic vesicle and branchial arches. By stage 35, also weakly expressed in the pronephros.

The catalysed reaction is S-ubiquitinyl-[E1 ubiquitin-activating enzyme]-L-cysteine + [E2 ubiquitin-conjugating enzyme]-L-cysteine = [E1 ubiquitin-activating enzyme]-L-cysteine + S-ubiquitinyl-[E2 ubiquitin-conjugating enzyme]-L-cysteine.. The protein operates within protein modification; protein ubiquitination. In terms of biological role, catalyzes the covalent attachment of ubiquitin to other proteins. Regulates pronephros development, possibly by promoting ubiquitination and thus inactivation or degradation of map3k10/mlk2. This Xenopus laevis (African clawed frog) protein is Ubiquitin-conjugating enzyme E2 D4 (ube2d4).